The chain runs to 332 residues: Ornithine carbamoyltransferase, catabolic (332 aa).

Carbamoyl phosphate is bound by residues 60–63, Q87, R111, and 138–141; these read STRT and HPTQ. L-ornithine contacts are provided by residues N170, D230, and 234 to 235; that span reads SM. Residues 271-272 and R316 contribute to the carbamoyl phosphate site; that span reads CL.

The protein belongs to the aspartate/ornithine carbamoyltransferase superfamily. OTCase family.

The protein resides in the cytoplasm. The enzyme catalyses carbamoyl phosphate + L-ornithine = L-citrulline + phosphate + H(+). Its pathway is amino-acid degradation; L-arginine degradation via ADI pathway; carbamoyl phosphate from L-arginine: step 2/2. Functionally, reversibly catalyzes the transfer of the carbamoyl group from carbamoyl phosphate (CP) to the N(epsilon) atom of ornithine (ORN) to produce L-citrulline. The protein is Ornithine carbamoyltransferase, catabolic (arcB) of Bacillus cereus (strain ATCC 14579 / DSM 31 / CCUG 7414 / JCM 2152 / NBRC 15305 / NCIMB 9373 / NCTC 2599 / NRRL B-3711).